Reading from the N-terminus, the 428-residue chain is tRNA(Ile)-lysidine synthase (428 aa).

Residue 25 to 30 coordinates ATP; it reads SGGIDS.

Belongs to the tRNA(Ile)-lysidine synthase family.

It is found in the cytoplasm. The enzyme catalyses cytidine(34) in tRNA(Ile2) + L-lysine + ATP = lysidine(34) in tRNA(Ile2) + AMP + diphosphate + H(+). In terms of biological role, ligates lysine onto the cytidine present at position 34 of the AUA codon-specific tRNA(Ile) that contains the anticodon CAU, in an ATP-dependent manner. Cytidine is converted to lysidine, thus changing the amino acid specificity of the tRNA from methionine to isoleucine. The polypeptide is tRNA(Ile)-lysidine synthase (Haemophilus ducreyi (strain 35000HP / ATCC 700724)).